Reading from the N-terminus, the 334-residue chain is Glycosylinositol phosphorylceramide mannosyl transferase 1 (334 aa).

Residues 1–26 (MGGGEVSKEMGACSLAYRRGDQKLRK) lie on the Cytoplasmic side of the membrane. The chain crosses the membrane as a helical; Signal-anchor for type II membrane protein span at residues 27–49 (FVTARSTKFLLFCCIAFVLVTIV). The Lumenal segment spans residues 50 to 334 (CRSSRPWVNS…AVDSRNLWFW (285 aa)). Residue N58 is glycosylated (N-linked (GlcNAc...) asparagine). Residues 145–150 (DSLNNR), 166–168 (DDD), R196, and 258–262 (RNCED) each bind substrate. D168 lines the Mn(2+) pocket. C260 and C305 form a disulfide bridge. The active site involves D262. The N-linked (GlcNAc...) asparagine glycan is linked to N271. Substrate-binding positions include 289-302 (STGI…TEKR) and 292-302 (ISSIGGHTEKR).

It belongs to the glycosyltransferase 64 family. Requires Mn(2+) as cofactor. As to expression, expressed in leaves, roots, stem, and flowers.

It localises to the golgi apparatus membrane. It participates in protein modification; protein glycosylation. The protein operates within sphingolipid metabolism. Its function is as follows. Mannosyl transferase (ManT) required for the biosynthesis of mannose-carrying glycosylinositol phosphorylceramides (GIPCs). Maybe involved in cell-cell adhesion that maintains the integrity of organs by providing mechanical strength and facilitating the movement of metabolites throughout the plant during development. Prevents abscisic acid- (ABA-) mediated effects on development (e.g. cell size, flowering time, senescence). Probably implicated in beta-(1,4)-galactan biosynthesis thus being a cell-wall synthesis-related (CWSR) protein. The chain is Glycosylinositol phosphorylceramide mannosyl transferase 1 from Arabidopsis thaliana (Mouse-ear cress).